The primary structure comprises 212 residues: Large ribosomal subunit protein uL3 (212 aa).

Residues arginine 131–arginine 155 form a disordered region.

Belongs to the universal ribosomal protein uL3 family. In terms of assembly, part of the 50S ribosomal subunit. Forms a cluster with proteins L14 and L19.

One of the primary rRNA binding proteins, it binds directly near the 3'-end of the 23S rRNA, where it nucleates assembly of the 50S subunit. This chain is Large ribosomal subunit protein uL3, found in Microcystis aeruginosa (strain NIES-843 / IAM M-2473).